We begin with the raw amino-acid sequence, 397 residues long: Transcription factor xenB (397 aa).

The segment at 220 to 249 (TISDFETGDRQTISRSDTNSEVRPIPESPS) is disordered. A compositionally biased stretch (polar residues) spans 229 to 240 (RQTISRSDTNSE).

In terms of biological role, transcription factor; part of the gene cluster that mediates the biosynthesis of xenoacremones such as xenoacremone A, a compound that shows inhibitory activity toward the PI3K/AKT signaling pathway and which has the ability to induce apoptosis of A549 lung cancer cells. Acts as a positive regulator of the xenoacremones biosynthesis gene cluster. This chain is Transcription factor xenB, found in Xenoacremonium sinensis (Endophyte fungus).